We begin with the raw amino-acid sequence, 340 residues long: S-adenosylmethionine:tRNA ribosyltransferase-isomerase (340 aa).

The protein belongs to the QueA family. In terms of assembly, monomer.

The protein localises to the cytoplasm. It catalyses the reaction 7-aminomethyl-7-carbaguanosine(34) in tRNA + S-adenosyl-L-methionine = epoxyqueuosine(34) in tRNA + adenine + L-methionine + 2 H(+). It functions in the pathway tRNA modification; tRNA-queuosine biosynthesis. Its function is as follows. Transfers and isomerizes the ribose moiety from AdoMet to the 7-aminomethyl group of 7-deazaguanine (preQ1-tRNA) to give epoxyqueuosine (oQ-tRNA). The sequence is that of S-adenosylmethionine:tRNA ribosyltransferase-isomerase from Chromobacterium violaceum (strain ATCC 12472 / DSM 30191 / JCM 1249 / CCUG 213 / NBRC 12614 / NCIMB 9131 / NCTC 9757 / MK).